The chain runs to 90 residues: Small ribosomal subunit protein bS20 (90 aa).

A compositionally biased stretch (polar residues) spans 1-10; it reads MANHKSTQKS. A disordered region spans residues 1 to 25; it reads MANHKSTQKSIRQDQKRNLINKSRK.

This sequence belongs to the bacterial ribosomal protein bS20 family.

Its function is as follows. Binds directly to 16S ribosomal RNA. The sequence is that of Small ribosomal subunit protein bS20 from Orientia tsutsugamushi (strain Ikeda) (Rickettsia tsutsugamushi).